The primary structure comprises 223 residues: Small ribosomal subunit protein uS3 (223 aa).

The region spanning 39-108 (IRNFVKKNSY…NILINIVEVK (70 aa)) is the KH type-2 domain.

It belongs to the universal ribosomal protein uS3 family. In terms of assembly, part of the 30S ribosomal subunit. Forms a tight complex with proteins S10 and S14.

In terms of biological role, binds the lower part of the 30S subunit head. Binds mRNA in the 70S ribosome, positioning it for translation. The polypeptide is Small ribosomal subunit protein uS3 (Clostridium botulinum (strain 657 / Type Ba4)).